A 527-amino-acid polypeptide reads, in one-letter code: MAAAAAPAVAVNGGVKVASQAYLESKAVKETRVLISDLCRQFYNLGWVSGTGGSITIKVHDDSIPKPNQLILMSPSGVQKERMEPEDMYVLAANGSILSSPSPKPYPHKPPKCSDCGPLFLKAYEMCNAGAVIHSHGMESCLVTMINPLSKEFKITHMEMIKGIKGHGYYDELVVPIIENTAYENELTDSLAKAIEEYPKTTAVLVRNHGIYIWGDSWISAKTQAECYHYLFDAAIKLHQLGLDWSTPNHGLIQNVKALIGSNRDINTSVKAGLKDSNHGMQSLPGCIVLDIEGTTTPITFVADVLFPYARDNVGRHLYATYETAETQDDIKLLRTQVEDDLARGVNEAVSIPPDDAGKEEVIAALVANVEAMIKADRKITALKQLQGHIWRTGFQNNELEGVVYDDVPEALEKWHALGIKVYIYSSGSRLAQRLIFGKTNYGDLRKYLSGFFDTTVGNKRETRSYIEISESVGVDRPSEILFVTDVVQEAVAAKGAGLEAVISIRQGNAPLPENHGFKTINSLSEI.

Residues M1–D244 form a methylthioribulose-1-phosphate dehydratase region. C116 serves as a coordination point for substrate. 2 residues coordinate Zn(2+): H134 and H136. E159 serves as the catalytic Proton donor/acceptor; for methylthioribulose-1-phosphate dehydratase activity. Zn(2+) is bound at residue H209. The interval I288 to I527 is enolase-phosphatase E1. Residues D291 and E293 each coordinate Mg(2+). Substrate is bound by residues S426 to S427 and K460. Residue D486 participates in Mg(2+) binding.

In the N-terminal section; belongs to the aldolase class II family. MtnB subfamily. The protein in the C-terminal section; belongs to the HAD-like hydrolase superfamily. MasA/MtnC family. Requires Zn(2+) as cofactor. Mg(2+) serves as cofactor.

It catalyses the reaction 5-(methylsulfanyl)-D-ribulose 1-phosphate = 5-methylsulfanyl-2,3-dioxopentyl phosphate + H2O. It carries out the reaction 5-methylsulfanyl-2,3-dioxopentyl phosphate + H2O = 1,2-dihydroxy-5-(methylsulfanyl)pent-1-en-3-one + phosphate. It participates in amino-acid biosynthesis; L-methionine biosynthesis via salvage pathway; L-methionine from S-methyl-5-thio-alpha-D-ribose 1-phosphate: step 2/6. It functions in the pathway amino-acid biosynthesis; L-methionine biosynthesis via salvage pathway; L-methionine from S-methyl-5-thio-alpha-D-ribose 1-phosphate: step 3/6. Its pathway is amino-acid biosynthesis; L-methionine biosynthesis via salvage pathway; L-methionine from S-methyl-5-thio-alpha-D-ribose 1-phosphate: step 4/6. This is Probable bifunctional methylthioribulose-1-phosphate dehydratase/enolase-phosphatase E1 from Ricinus communis (Castor bean).